A 428-amino-acid chain; its full sequence is MDQLRLEPVSRVNGVVNIPGSKSISNRALLLATLASGETTLVNLLDSDDIRHMLNALKSLGVNFTLSDDKTVCTLNGLGGPIQTDKAFELFLGNAGTAMRPLCAALTLGTGEFTLTGEPRMEERPIGDLVDALRQLGADIRYLKNDGFPPLTINATGLAGGVVEIDGSLSSQFLTALLMVAPLAKGAVTIAVKGELVSKPYIDITLDLMAKFGVTVVNDNYQRFEIASGQHYVSPGKVLVEGDASSASYFLAAGAIGGGEVKVTGVGRLAVQGDVKFADALAAMGADIEWGEDYIIARGSKLHGIDMDMNHIPDAAMTIATAALFAEGTTRMSNIYNWRIKETDRLAAMATELRKVGAKVEEGHDYIQITPPVKPVHAEIDTYNDHRMAMCFSLLAFADCGVTINDPGCTSKTFPDYFNRFANLAKPD.

3-phosphoshikimate is bound by residues lysine 22, serine 23, and arginine 27. Residue lysine 22 coordinates phosphoenolpyruvate. Phosphoenolpyruvate contacts are provided by glycine 96 and arginine 124. 3-phosphoshikimate is bound by residues serine 170, serine 171, glutamine 172, serine 198, aspartate 314, asparagine 337, and lysine 341. Glutamine 172 contacts phosphoenolpyruvate. The active-site Proton acceptor is aspartate 314. Residues arginine 345, arginine 387, and lysine 412 each contribute to the phosphoenolpyruvate site.

It belongs to the EPSP synthase family. In terms of assembly, monomer.

Its subcellular location is the cytoplasm. The enzyme catalyses 3-phosphoshikimate + phosphoenolpyruvate = 5-O-(1-carboxyvinyl)-3-phosphoshikimate + phosphate. Its pathway is metabolic intermediate biosynthesis; chorismate biosynthesis; chorismate from D-erythrose 4-phosphate and phosphoenolpyruvate: step 6/7. Catalyzes the transfer of the enolpyruvyl moiety of phosphoenolpyruvate (PEP) to the 5-hydroxyl of shikimate-3-phosphate (S3P) to produce enolpyruvyl shikimate-3-phosphate and inorganic phosphate. This Shewanella amazonensis (strain ATCC BAA-1098 / SB2B) protein is 3-phosphoshikimate 1-carboxyvinyltransferase.